Consider the following 508-residue polypeptide: MNKKLNEVLLKLDQDLIKCVKGSLDLEISGVTYSSKLVLPRFVFFALPGIHFDGHDFIEIAIQKGSNVVVCSRDVDFYSPNVTYIKVDDFNIRKFMSNFSNIFYDEPSKKLKVIGVTGTDGKSSVCYYIYLLFKKKGVKVGFISTVFFDDGSGSLIKNPYRQSTPESTEIHSFLSTMVKNEAQYAILESTSHGLDLETARLIDVNYFAVVFTNIGHEHLEFHGTIQNYLNVKLGLFRSVSDDAGFGVINLDDLYSSDFKNAVKKSFTYSLKSSKADFFVSFIDEKTDSTRFEFYHKGVKYLANVSLLGSFNVENVMAALILVSQILNIDIQDIVDKLNCIKSLDGRMDSINLGQNFSVIIDYAHTPGAFSKLFPIFKRFATNRLISVFGSAGERDVEKRFLQGQIADIYSDLIILCDEDPRGENSMCIIKDIAKGIVNKVENKDLFFIADRKQAIEKAISLAKAGDLVVALGKGHESSIIYKNREVFWNEQEVVKNAILSLEKSEKEK.

Residue serine 35 participates in UDP-N-acetyl-alpha-D-muramoyl-L-alanyl-D-glutamate binding. 118–124 serves as a coordination point for ATP; that stretch reads GTDGKSS. UDP-N-acetyl-alpha-D-muramoyl-L-alanyl-D-glutamate contacts are provided by residues 163–164, threonine 190, and arginine 200; that span reads ST. Position 232 is an N6-carboxylysine (lysine 232).

It belongs to the MurCDEF family. MurE subfamily. In terms of processing, carboxylation is probably crucial for Mg(2+) binding and, consequently, for the gamma-phosphate positioning of ATP.

The protein resides in the cytoplasm. Its pathway is cell wall biogenesis; peptidoglycan biosynthesis. Functionally, catalyzes the addition of an amino acid to the nucleotide precursor UDP-N-acetylmuramoyl-L-alanyl-D-glutamate (UMAG) in the biosynthesis of bacterial cell-wall peptidoglycan. The chain is UDP-N-acetylmuramyl-tripeptide synthetase from Borreliella burgdorferi (strain ATCC 35210 / DSM 4680 / CIP 102532 / B31) (Borrelia burgdorferi).